We begin with the raw amino-acid sequence, 387 residues long: GTP-binding protein 10 (387 aa).

In terms of domain architecture, Obg spans 13 to 148 (GNFIDNLRLF…RVIHLDLKLI (136 aa)). One can recognise an OBG-type G domain in the interval 149-344 (ADIGLVGFPN…LKNCIRKSLD (196 aa)). Residues 155–162 (GFPNAGKS), 202–206 (DLPGL), and 278–281 (NKMD) contribute to the GTP site.

It belongs to the TRAFAC class OBG-HflX-like GTPase superfamily. OBG GTPase family.

The protein resides in the nucleus. The protein localises to the nucleolus. May be involved in the ribosome maturation process. This chain is GTP-binding protein 10 (GTPBP10), found in Bos taurus (Bovine).